Here is a 120-residue protein sequence, read N- to C-terminus: uncharacterized protein (120 aa).

Positions M1–A22 are cleaved as a signal peptide. Over F23–S59 the chain is Extracellular. The helical transmembrane segment at L60–L80 threads the bilayer. Topologically, residues S81–N120 are cytoplasmic.

The protein resides in the membrane. This is an uncharacterized protein from Schizosaccharomyces pombe (strain 972 / ATCC 24843) (Fission yeast).